Consider the following 592-residue polypeptide: Serine/threonine-protein kinase ksg1 (592 aa).

The span at 1–10 (MRNTHNPNET) shows a compositional bias: polar residues. The disordered stretch occupies residues 1–92 (MRNTHNPNET…NPSSGASTPN (92 aa)). The segment covering 11–22 (EASEDAENDTQS) has biased composition (acidic residues). Positions 27-37 (SFDHGSSEKLN) are enriched in basic and acidic residues. Residues 42-68 (PKTQNSAIPQSNALNTTPNESTSQIDS) are compositionally biased toward polar residues. Residues S64 and S69 each carry the phosphoserine modification. Over residues 80-92 (STPNPSSGASTPN) the composition is skewed to polar residues. The 268-residue stretch at 99–366 (FKFGEILGEG…VDEIHQHPFF (268 aa)) folds into the Protein kinase domain. Residues 109–111 (SYS) and K128 each bind ATP. The PIF-pocket stretch occupies residues 130 to 175 (LDKRHIIKEKKEKYVNIEKEALCILSKHPGFIKLFYTFQDAHNLYF). ATP contacts are provided by residues 178-180 (SLA) and E184. D223 acts as the Proton acceptor in catalysis. ATP is bound by residues E227 and D241. Residues 461–572 (ISKIGTLNVY…ELLDKASSIS (112 aa)) enclose the PH domain.

The protein belongs to the protein kinase superfamily. AGC Ser/Thr protein kinase family. PDPK1 subfamily.

Its subcellular location is the cytoplasm. The enzyme catalyses L-seryl-[protein] + ATP = O-phospho-L-seryl-[protein] + ADP + H(+). It carries out the reaction L-threonyl-[protein] + ATP = O-phospho-L-threonyl-[protein] + ADP + H(+). Involved in the control of sexual development and cell growth under stressed conditions. Phosphorylates AGC kinase gad8 at 'Thr-387', activating gad8 kinase activity and promoting sexual development. Phosphorylates AGC kinase psk1 at 'Ser-248', activating psk1 kinase activity and promoting phosphorylation of ribosomal protein S6. The polypeptide is Serine/threonine-protein kinase ksg1 (Schizosaccharomyces pombe (strain 972 / ATCC 24843) (Fission yeast)).